We begin with the raw amino-acid sequence, 185 residues long: Large ribosomal subunit protein uL5 (185 aa).

The protein belongs to the universal ribosomal protein uL5 family. Part of the 50S ribosomal subunit; part of the 5S rRNA/L5/L18/L25 subcomplex. Contacts the 5S rRNA and the P site tRNA. Forms a bridge to the 30S subunit in the 70S ribosome.

In terms of biological role, this is one of the proteins that bind and probably mediate the attachment of the 5S RNA into the large ribosomal subunit, where it forms part of the central protuberance. In the 70S ribosome it contacts protein S13 of the 30S subunit (bridge B1b), connecting the 2 subunits; this bridge is implicated in subunit movement. Contacts the P site tRNA; the 5S rRNA and some of its associated proteins might help stabilize positioning of ribosome-bound tRNAs. The protein is Large ribosomal subunit protein uL5 of Phocaeicola vulgatus (strain ATCC 8482 / DSM 1447 / JCM 5826 / CCUG 4940 / NBRC 14291 / NCTC 11154) (Bacteroides vulgatus).